Here is a 175-residue protein sequence, read N- to C-terminus: MKLTLEPAPRCLHEYVSQLLEDWQPECLSCEYSHGGSSRPSLHDLFDLELENSRSPSPLLCDWCAEADSESTISTETDVGFTLNTPPVSPLPSYSTSPASIPEDMLLCLEEMPTFDDGDEVRSATTSFESRREKNFDPHVGSFFGCLRCAYYQEQGENSICGLCYLKALAEGKIF.

The interaction with RB1 in competition with E2F1 stretch occupies residues 40–48; that stretch reads PSLHDLFDL. An LXCXE motif, interaction with host RB1 motif is present at residues 106–110; that stretch reads LLCLE. Residues 146–164 fold into a zinc finger; that stretch reads CLRCAYYQEQGENSICGLC.

This sequence belongs to the adenoviridae E1A protein family. In terms of assembly, interacts with host UBE2I; this interaction interferes with polySUMOylation. Interacts with host RB1; this interaction induces the aberrant dissociation of RB1-E2F1 complex thereby disrupting the activity of RB1 and activating E2F1-regulated genes. Interacts with host ATF7; the interaction enhances ATF7-mediated viral transactivation activity which requires the zinc binding domains of both proteins. Isoform early E1A 32 kDa protein and isoform early E1A 26 kDa protein interact (via N-terminus) with CUL1 and E3 ubiquitin ligase RBX1; these interactions inhibit RBX1-CUL1-dependent elongation reaction of ubiquitin chains and attenuate ubiquitination of SCF(FBXW7) target proteins. Interacts (via PXLXP motif) with host ZMYND11/BS69 (via MYND-type zinc finger); this interaction inhibits E1A mediated transactivation. Interacts with host EP300; this interaction stimulates the acetylation of RB1 by recruiting EP300 and RB1 into a multimeric-protein complex. Interacts with host CTBP1 and CTBP2; this interaction seems to potentiate viral replication. Interacts with host DCAF7. Interacts with host DYRK1A. Interacts with host KPNA4; this interaction allows E1A import into the host nucleus. Interacts with host EP400; this interaction stabilizes MYC. Interacts with host TBP protein; this interaction probably disrupts the TBP-TATA complex.

It is found in the host nucleus. In terms of biological role, plays a role in viral genome replication by driving entry of quiescent cells into the cell cycle. Stimulation of progression from G1 to S phase allows the virus to efficiently use the cellular DNA replicating machinery to achieve viral genome replication. E1A protein has both transforming and trans-activating activities. Induces the disassembly of the E2F1 transcription factor from RB1 by direct competition for the same binding site on RB1, with subsequent transcriptional activation of E2F1-regulated S-phase genes and of the E2 region of the adenoviral genome. Release of E2F1 leads to the ARF-mediated inhibition of MDM2 and causes TP53/p53 to accumulate because it is not targeted for degradation by MDM2-mediated ubiquitination anymore. This increase in TP53, in turn, would arrest the cell proliferation and direct its death but this effect is counteracted by the viral protein E1B-55K. Inactivation of the ability of RB1 to arrest the cell cycle is critical for cellular transformation, uncontrolled cellular growth and proliferation induced by viral infection. Interaction with RBX1 and CUL1 inhibits ubiquitination of the proteins targeted by SCF(FBXW7) ubiquitin ligase complex, and may be linked to unregulated host cell proliferation. The tumorigenesis-restraining activity of E1A may be related to the disruption of the host CtBP-CtIP complex through the CtBP binding motif. The chain is Early E1A protein from Canis lupus familiaris (Dog).